A 655-amino-acid chain; its full sequence is Proprotein convertase subtilisin/kexin type 4 (655 aa).

The N-terminal stretch at 1–26 (MRPSQTELWLGLTLTLALLAVRWASA) is a signal peptide. The propeptide occupies 27–110 (QAPIYVSSWA…QQTLRRRVKR (84 aa)). In terms of domain architecture, Peptidase S8 spans 123-437 (QWYMNKEIQQ…YGLLDAGLLV (315 aa)). Catalysis depends on charge relay system residues Asp-155, His-196, and Ser-370. The 135-residue stretch at 446 to 580 (TKPQKKCAIR…TLLLYGTAED (135 aa)) folds into the P/Homo B domain. Residue Asn-472 is glycosylated (N-linked (GlcNAc...) asparagine).

It belongs to the peptidase S8 family. Furin subfamily. As to quaternary structure, the proPCSK4 form interacts with HSPA5; the interaction takes place at the endoplasmic reticulum. Post-translationally, N-glycosylated. In terms of processing, synthesized in the endoplasmic reticulum as a zymogen, is matured by autocatalytic cleavage between the prodomain and the catalytic domain. In terms of tissue distribution, expressed abundantly in the testis since postnatal Day 16. In testis, strongly detected in round and elongated spermatids as well as spermatocytes. Also observed in residual bodies engulfed by Sertoli cells at spermatogenic stages VIII and IX. In ovaries, expressed in macrophage-like cells of the ovarian theca, interstitium and corpora lutea.

The protein resides in the cytoplasmic vesicle. The protein localises to the secretory vesicle. Its subcellular location is the acrosome membrane. In terms of biological role, proprotein convertase involved in the processing of hormone and other protein precursors at sites comprised of pairs of basic amino acid residues. In males, important for ADAM2 processing as well as other acrosomal proteins with roles in fertilization and critical for normal fertilization events such as sperm capacitation, acrosome reaction and binding of sperm to zona pellucida. Also plays a role in female fertility, involved in the regulation of trophoblast migration and placental development, may be through the proteolytical processing and activation of proteins such as IGF2. May also participate in folliculogenesis in the ovaries. The protein is Proprotein convertase subtilisin/kexin type 4 (Pcsk4) of Mus musculus (Mouse).